Consider the following 187-residue polypeptide: Ribosome-recycling factor (187 aa).

This sequence belongs to the RRF family.

Its subcellular location is the cytoplasm. In terms of biological role, responsible for the release of ribosomes from messenger RNA at the termination of protein biosynthesis. May increase the efficiency of translation by recycling ribosomes from one round of translation to another. The chain is Ribosome-recycling factor from Rhodopseudomonas palustris (strain HaA2).